The chain runs to 356 residues: tRNA N6-adenosine threonylcarbamoyltransferase (356 aa).

3 residues coordinate a divalent metal cation: histidine 124, histidine 128, and tyrosine 145. Residues tyrosine 145–glycine 149, aspartate 177, glycine 192, glutamate 196, and asparagine 287 each bind substrate. Aspartate 315 serves as a coordination point for a divalent metal cation.

This sequence belongs to the KAE1 / TsaD family. As to quaternary structure, component of the EKC/KEOPS complex composed of at least BUD32, CGI121, GON7, KAE1 and PCC1; the whole complex dimerizes. A divalent metal cation serves as cofactor.

Its subcellular location is the cytoplasm. It is found in the nucleus. It catalyses the reaction L-threonylcarbamoyladenylate + adenosine(37) in tRNA = N(6)-L-threonylcarbamoyladenosine(37) in tRNA + AMP + H(+). Its function is as follows. Component of the EKC/KEOPS complex that is required for the formation of a threonylcarbamoyl group on adenosine at position 37 (t(6)A37) in tRNAs that read codons beginning with adenine. The complex is probably involved in the transfer of the threonylcarbamoyl moiety of threonylcarbamoyl-AMP (TC-AMP) to the N6 group of A37. KAE1 likely plays a direct catalytic role in this reaction, but requires other protein(s) of the complex to fulfill this activity. The EKC/KEOPS complex also promotes both telomere uncapping and telomere elongation. The complex is required for efficient recruitment of transcriptional coactivators. This chain is tRNA N6-adenosine threonylcarbamoyltransferase, found in Yarrowia lipolytica (strain CLIB 122 / E 150) (Yeast).